Reading from the N-terminus, the 540-residue chain is Chaperonin GroEL (540 aa).

ATP is bound by residues 30 to 33 (TLGP), K51, 87 to 91 (DGTTT), G415, and D495.

It belongs to the chaperonin (HSP60) family. Forms a cylinder of 14 subunits composed of two heptameric rings stacked back-to-back. Interacts with the co-chaperonin GroES.

The protein resides in the cytoplasm. The enzyme catalyses ATP + H2O + a folded polypeptide = ADP + phosphate + an unfolded polypeptide.. In terms of biological role, together with its co-chaperonin GroES, plays an essential role in assisting protein folding. The GroEL-GroES system forms a nano-cage that allows encapsulation of the non-native substrate proteins and provides a physical environment optimized to promote and accelerate protein folding. The sequence is that of Chaperonin GroEL from Erwinia aphidicola.